Reading from the N-terminus, the 359-residue chain is RNA 3'-terminal phosphate cyclase (359 aa).

Residues Q100 and 291–294 (HASD) contribute to the ATP site. The active-site Tele-AMP-histidine intermediate is the H317.

Belongs to the RNA 3'-terminal cyclase family. Type 1 subfamily.

It is found in the cytoplasm. It carries out the reaction a 3'-end 3'-phospho-ribonucleotide-RNA + ATP = a 3'-end 2',3'-cyclophospho-ribonucleotide-RNA + AMP + diphosphate. In terms of biological role, catalyzes the conversion of 3'-phosphate to a 2',3'-cyclic phosphodiester at the end of RNA. The mechanism of action of the enzyme occurs in 3 steps: (A) adenylation of the enzyme by ATP; (B) transfer of adenylate to an RNA-N3'P to produce RNA-N3'PP5'A; (C) and attack of the adjacent 2'-hydroxyl on the 3'-phosphorus in the diester linkage to produce the cyclic end product. The biological role of this enzyme is unknown but it is likely to function in some aspects of cellular RNA processing. In Hyperthermus butylicus (strain DSM 5456 / JCM 9403 / PLM1-5), this protein is RNA 3'-terminal phosphate cyclase.